A 390-amino-acid chain; its full sequence is LIM/homeobox protein Lhx4 (390 aa).

LIM zinc-binding domains follow at residues 28–87 (PQCA…RFGT) and 88–150 (KCTA…AKQN). The segment at residues 157–216 (AKRPRTTITAKQLETLKNAYKNSPKPARHVREQLSSETGLDMRVVQVWFQNRRAKEKRLK) is a DNA-binding region (homeobox). The interaction with DNA stretch occupies residues 161–181 (RTTITAKQLETLKNAYKNSPK). Residues 199–211 (RVVQVWFQNRRAK) form an interaction with 5-mCpG DNA region. Disordered stretches follow at residues 230–253 (SVKRSRGSSKQEKESSAEDCGVSD) and 356–390 (AGGPTSDISTGSSVGYPDFPTSPGSWLDEMDHPPF).

The protein localises to the nucleus. Its function is as follows. May play a critical role in the development of respiratory control mechanisms and in the normal growth and maturation of the lung. Binds preferentially to methylated DNA. The polypeptide is LIM/homeobox protein Lhx4 (LHX4) (Homo sapiens (Human)).